The primary structure comprises 295 residues: Virginiamycin B lyase (295 aa).

H228 is a binding site for substrate. Position 268 (E268) interacts with Mg(2+). The active-site Proton acceptor is the H270. E285 is a binding site for Mg(2+).

It belongs to the Vgb family. In terms of assembly, monomer. It depends on Mg(2+) as a cofactor.

Inactivates the type B streptogramin antibiotics by linearizing the lactone ring at the ester linkage, generating a free phenylglycine carboxylate and converting the threonyl moiety into 2-amino-butenoic acid. The chain is Virginiamycin B lyase from Clostridium beijerinckii (strain ATCC 51743 / NCIMB 8052) (Clostridium acetobutylicum).